Here is a 318-residue protein sequence, read N- to C-terminus: NADH-ubiquinone oxidoreductase chain 1 (318 aa).

8 helical membrane passes run 3-23 (FINI…LTLV), 70-90 (LFII…IPLP), 100-120 (LGML…LWSG), 146-166 (MAII…QMLI), 171-191 (HIWL…STLA), 231-251 (IILM…HINY), 254-273 (LYST…FLWI), and 294-314 (LPLT…LAGI).

This sequence belongs to the complex I subunit 1 family. Core subunit of respiratory chain NADH dehydrogenase (Complex I) which is composed of 45 different subunits.

It localises to the mitochondrion inner membrane. The enzyme catalyses a ubiquinone + NADH + 5 H(+)(in) = a ubiquinol + NAD(+) + 4 H(+)(out). Its function is as follows. Core subunit of the mitochondrial membrane respiratory chain NADH dehydrogenase (Complex I) which catalyzes electron transfer from NADH through the respiratory chain, using ubiquinone as an electron acceptor. Essential for the catalytic activity and assembly of complex I. This chain is NADH-ubiquinone oxidoreductase chain 1, found in Rattus norvegicus (Rat).